Reading from the N-terminus, the 309-residue chain is Uricase-2 isozyme 2 (309 aa).

Residues Lys-18 and Thr-64 each act as charge relay system in the active site. Residues Thr-64, Asp-65, Phe-166, Arg-183, Val-238, Gln-239, and Asn-265 each contribute to the urate site. His-267 acts as the Charge relay system in catalysis.

The protein belongs to the uricase family. As to quaternary structure, homotetramer.

It localises to the peroxisome. The catalysed reaction is urate + O2 + H2O = 5-hydroxyisourate + H2O2. Its pathway is purine metabolism; urate degradation; (S)-allantoin from urate: step 1/3. Catalyzes the oxidation of uric acid to 5-hydroxyisourate, which is further processed to form (S)-allantoin. This chain is Uricase-2 isozyme 2, found in Glycine max (Soybean).